A 1215-amino-acid chain; its full sequence is Reverse gyrase 2 (1215 aa).

The segment at 3–44 adopts an RG N-terminal-type zinc-finger fold; the sequence is GGVNAVYMGLCYNCGGNIDEDRLEKGLPCARCLPSPPRRATP. Zn(2+) is bound by residues C13, C16, C31, and C34. ATP is bound by residues Q89 and 106–113; that span reads APTGVGKS. Residues 93-249 enclose the Helicase ATP-binding domain; it reads AKRLVKGDSF…SLVKARLKLY (157 aa). Residues 209–212 carry the DEAD box motif; the sequence is DDVD. The topoisomerase I stretch occupies residues 614-1215; sequence VRVKTTLLVV…TGDVMGQSEA (602 aa). The region spanning 618–783 is the Toprim domain; that stretch reads TTLLVVESPT…NVRRGRFHEV (166 aa). E624 is a binding site for Mg(2+). The segment at 702-729 adopts an RG C-terminal-type zinc-finger fold; it reads IKRCLDCGAQHTSSSPFCPRCGSPRQVD. Zn(2+) is bound by residues C705, C708, C719, and C722. D752 provides a ligand contact to Mg(2+). The Topo IA-type catalytic domain occupies 799-1200; that stretch reads EKSLIEAQKV…SVWRMVDEAV (402 aa). Y943 (O-(5'-phospho-DNA)-tyrosine intermediate) is an active-site residue.

In the N-terminal section; belongs to the DEAD box helicase family. DDVD subfamily. The protein in the C-terminal section; belongs to the type IA topoisomerase family. In terms of assembly, monomer. Zn(2+) serves as cofactor. Mg(2+) is required as a cofactor.

It is found in the cytoplasm. It carries out the reaction ATP + H2O = ADP + phosphate + H(+). In terms of biological role, modifies the topological state of DNA by introducing positive supercoils in an ATP-dependent process, increasing the linking number in steps of +1. Binds to single-stranded DNA, transiently cleaves and then rejoins the ends, introducing a positive supercoil in the process. The scissile phosphodiester is attacked by the catalytic tyrosine of the enzyme, resulting in the formation of a DNA-(5'-phosphotyrosyl)-enzyme intermediate. Probably involved in rewinding DNA strands in regions of the chromosome that have opened up to allow replication, transcription, DNA repair and/or for DNA protection. In Aeropyrum pernix (strain ATCC 700893 / DSM 11879 / JCM 9820 / NBRC 100138 / K1), this protein is Reverse gyrase 2.